A 223-amino-acid polypeptide reads, in one-letter code: ATP synthase subunit a 2 (223 aa).

5 helical membrane-spanning segments follow: residues 17–37 (VAIT…ALVC), 77–97 (FLPL…SGVL), 106–126 (KIET…YFGV), 173–193 (FIIG…LMAL), and 195–215 (ILVG…FIGA).

This sequence belongs to the ATPase A chain family. F-type ATPases have 2 components, CF(1) - the catalytic core - and CF(0) - the membrane proton channel. CF(1) has five subunits: alpha(3), beta(3), gamma(1), delta(1), epsilon(1). CF(0) has four main subunits: a, b, b' and c.

Its subcellular location is the cell inner membrane. Key component of the proton channel; it plays a direct role in the translocation of protons across the membrane. The sequence is that of ATP synthase subunit a 2 from Bradyrhizobium sp. (strain BTAi1 / ATCC BAA-1182).